Consider the following 69-residue polypeptide: Large ribosomal subunit protein uL29 (69 aa).

It belongs to the universal ribosomal protein uL29 family.

The protein is Large ribosomal subunit protein uL29 of Sulfolobus acidocaldarius (strain ATCC 33909 / DSM 639 / JCM 8929 / NBRC 15157 / NCIMB 11770).